A 362-amino-acid chain; its full sequence is 3-dehydroquinate synthase (362 aa).

Residues Asp-71–Lys-76, Gly-105–Asp-109, Thr-129–Thr-130, Lys-142, Lys-151, and Cys-169–Thr-172 each bind NAD(+). Zn(2+)-binding residues include Glu-184, His-247, and His-264.

This sequence belongs to the sugar phosphate cyclases superfamily. Dehydroquinate synthase family. Requires Co(2+) as cofactor. Zn(2+) serves as cofactor. NAD(+) is required as a cofactor.

The protein localises to the cytoplasm. The catalysed reaction is 7-phospho-2-dehydro-3-deoxy-D-arabino-heptonate = 3-dehydroquinate + phosphate. It participates in metabolic intermediate biosynthesis; chorismate biosynthesis; chorismate from D-erythrose 4-phosphate and phosphoenolpyruvate: step 2/7. In terms of biological role, catalyzes the conversion of 3-deoxy-D-arabino-heptulosonate 7-phosphate (DAHP) to dehydroquinate (DHQ). The polypeptide is 3-dehydroquinate synthase (Salmonella enteritidis PT4 (strain P125109)).